The sequence spans 472 residues: Carbohydrate sulfotransferase 3 (472 aa).

The Cytoplasmic segment spans residues 1 to 19 (MEKGLALPQDFRDLVHSLK). A helical; Signal-anchor for type II membrane protein transmembrane segment spans residues 20 to 38 (IRGRYVLFLAFVVIVFIFI). Topologically, residues 39-472 (EKENKIISRV…LEERGTFWVT (434 aa)) are lumenal. 3 N-linked (GlcNAc...) asparagine glycosylation sites follow: Asn-63, Asn-74, and Asn-96. 135-141 (TRTGSSF) provides a ligand contact to 3'-phosphoadenylyl sulfate. N-linked (GlcNAc...) asparagine glycosylation is present at Asn-250. 295-303 (RDPRAVLAS) provides a ligand contact to 3'-phosphoadenylyl sulfate. N-linked (GlcNAc...) asparagine glycosylation is found at Asn-413 and Asn-457.

Belongs to the sulfotransferase 1 family. Gal/GlcNAc/GalNAc subfamily. N-glycosylated. As to expression, widely expressed. Highly expressed in spleen, lung, eye and stomach. Constitutively expressed at low level during the mid- to late-gestation period. Expressed in the brain in a temporally controlled manner: peaks at 2 weeks after birth in the cerebellum, but at 3 weeks in the cerebrum. Localizes to stromal cells in the bone marrow, and stromal cells in the marginal zone and red pulp of the spleen, but the sense probe did not.

It localises to the golgi apparatus membrane. The enzyme catalyses chondroitin beta-D-glucuronate + n 3'-phosphoadenylyl sulfate = chondroitin 6'-sulfate + n adenosine 3',5'-bisphosphate + n H(+). It carries out the reaction 3'-phosphoadenylyl sulfate + keratan = adenosine 3',5'-bisphosphate + keratan 6'-sulfate.. Sulfotransferase that utilizes 3'-phospho-5'-adenylyl sulfate (PAPS) as sulfonate donor to catalyze the transfer of sulfate to position 6 of the N-acetylgalactosamine (GalNAc) residue of chondroitin. Chondroitin sulfate constitutes the predominant proteoglycan present in cartilage and is distributed on the surfaces of many cells and extracellular matrices. Catalyzes with a lower efficiency the sulfation of Gal residues of keratan sulfate, another glycosaminoglycan. Can also catalyze the sulfation of the Gal residues in sialyl N-acetyllactosamine (sialyl LacNAc) oligosaccharides. May play a role in the maintenance of naive T-lymphocytes in the spleen. This chain is Carbohydrate sulfotransferase 3 (Chst3), found in Mus musculus (Mouse).